We begin with the raw amino-acid sequence, 428 residues long: Glutamate-1-semialdehyde 2,1-aminomutase (428 aa).

K265 is modified (N6-(pyridoxal phosphate)lysine).

The protein belongs to the class-III pyridoxal-phosphate-dependent aminotransferase family. HemL subfamily. As to quaternary structure, homodimer. Pyridoxal 5'-phosphate is required as a cofactor.

Its subcellular location is the cytoplasm. It carries out the reaction (S)-4-amino-5-oxopentanoate = 5-aminolevulinate. It participates in porphyrin-containing compound metabolism; protoporphyrin-IX biosynthesis; 5-aminolevulinate from L-glutamyl-tRNA(Glu): step 2/2. The chain is Glutamate-1-semialdehyde 2,1-aminomutase from Shewanella frigidimarina (strain NCIMB 400).